The following is a 130-amino-acid chain: Small ribosomal subunit protein uS8 (130 aa).

Belongs to the universal ribosomal protein uS8 family. In terms of assembly, part of the 30S ribosomal subunit.

Functionally, one of the primary rRNA binding proteins, it binds directly to 16S rRNA central domain where it helps coordinate assembly of the platform of the 30S subunit. This is Small ribosomal subunit protein uS8 from Thermococcus onnurineus (strain NA1).